A 310-amino-acid polypeptide reads, in one-letter code: ADP-L-glycero-D-manno-heptose-6-epimerase (310 aa).

NADP(+) contacts are provided by residues 10 to 11 (FI), 31 to 32 (DN), lysine 38, lysine 53, 75 to 79 (EGACS), and asparagine 92. The Proton acceptor role is filled by tyrosine 140. Lysine 144 provides a ligand contact to NADP(+). Asparagine 169 lines the substrate pocket. Positions 170 and 178 each coordinate NADP(+). The active-site Proton acceptor is the lysine 178. Residues serine 180, histidine 187, 201–204 (FEGS), arginine 209, and tyrosine 272 contribute to the substrate site.

Belongs to the NAD(P)-dependent epimerase/dehydratase family. HldD subfamily. Homopentamer. It depends on NADP(+) as a cofactor.

It carries out the reaction ADP-D-glycero-beta-D-manno-heptose = ADP-L-glycero-beta-D-manno-heptose. Its pathway is nucleotide-sugar biosynthesis; ADP-L-glycero-beta-D-manno-heptose biosynthesis; ADP-L-glycero-beta-D-manno-heptose from D-glycero-beta-D-manno-heptose 7-phosphate: step 4/4. Functionally, catalyzes the interconversion between ADP-D-glycero-beta-D-manno-heptose and ADP-L-glycero-beta-D-manno-heptose via an epimerization at carbon 6 of the heptose. The polypeptide is ADP-L-glycero-D-manno-heptose-6-epimerase (Salmonella paratyphi C (strain RKS4594)).